Here is a 330-residue protein sequence, read N- to C-terminus: MENLEAKILEADSLEVLEKVRIELFGKKGLLAAQFAKMKDIPGPEKKAFAEGLNKQKTALQEAFDARYEVLKAEEIEKMLKSEAIDISLYGAVAEKGALHPVMETMDKIIDYFVALNFAVETGPMVEDDFHNFEALNLPKYHPARDMQDTFYFKDSGLLRTHTSPVQIRTMLETKPPIRMIAPGSVFRRDYDLTHTPMFHQVEGLVVDEKGKVSFANLKAILTDFLQYMFGDVEVRFRPSFFPFTEPSAEVDISCIFCEGKGCRVCSHTGWLEVLGCGIVDPNVFKAVGYEDVSGYAFGLGVERFAMLMHKIPDLRSLFEGDIRLLEQFR.

Glu-246 contacts Mg(2+).

Belongs to the class-II aminoacyl-tRNA synthetase family. Phe-tRNA synthetase alpha subunit type 1 subfamily. Tetramer of two alpha and two beta subunits. It depends on Mg(2+) as a cofactor.

It is found in the cytoplasm. It carries out the reaction tRNA(Phe) + L-phenylalanine + ATP = L-phenylalanyl-tRNA(Phe) + AMP + diphosphate + H(+). The protein is Phenylalanine--tRNA ligase alpha subunit of Sulfurovum sp. (strain NBC37-1).